The primary structure comprises 603 residues: Elongation factor 4 (603 aa).

Residues 7–191 (DNIRNFSIVA…AIVTRLPPPQ (185 aa)) enclose the tr-type G domain. GTP is bound by residues 19 to 24 (DHGKST) and 138 to 141 (NKVD).

This sequence belongs to the TRAFAC class translation factor GTPase superfamily. Classic translation factor GTPase family. LepA subfamily.

Its subcellular location is the cell inner membrane. The catalysed reaction is GTP + H2O = GDP + phosphate + H(+). In terms of biological role, required for accurate and efficient protein synthesis under certain stress conditions. May act as a fidelity factor of the translation reaction, by catalyzing a one-codon backward translocation of tRNAs on improperly translocated ribosomes. Back-translocation proceeds from a post-translocation (POST) complex to a pre-translocation (PRE) complex, thus giving elongation factor G a second chance to translocate the tRNAs correctly. Binds to ribosomes in a GTP-dependent manner. The sequence is that of Elongation factor 4 from Rhodopseudomonas palustris (strain HaA2).